The sequence spans 459 residues: Asperlicin C monooxygenase (459 aa).

Positions 49, 62, and 121 each coordinate FAD. The active site involves Arg-199. Asp-323 and Ala-336 together coordinate FAD.

The protein belongs to the paxM FAD-dependent monooxygenase family. FAD serves as cofactor.

It catalyses the reaction asperlicin C + NADPH + O2 + H(+) = asperlicin E + NADP(+) + H2O. The enzyme catalyses asperlicin C + NADH + O2 + H(+) = asperlicin E + NAD(+) + H2O. Functionally, catalyzes the conversion of asperlicin A to form asperlicin E, a potent cholecystokinin receptor CCK(A) antagonist. This is Asperlicin C monooxygenase from Petromyces alliaceus (Aspergillus alliaceus).